A 427-amino-acid chain; its full sequence is Neuronal pentraxin-2 (427 aa).

An N-terminal signal peptide occupies residues 1–17; the sequence is MLALLAAGVAFAVVVLA. N144 and N185 each carry an N-linked (GlcNAc...) asparagine glycan. A Pentraxin (PTX) domain is found at 219 to 420; that stretch reads DAFKVSLPFR…GASKWPVETC (202 aa). C249 and C309 are oxidised to a cystine. The Ca(2+) site is built by N273, E351, Q352, D353, and Q363. The N-linked (GlcNAc...) asparagine glycan is linked to N389.

In terms of assembly, homooligomer or heterooligomer (probably pentamer) with neuronal pentraxin receptor (NPTXR). Ca(2+) is required as a cofactor. Testis specific.

It is found in the cytoplasmic vesicle. The protein resides in the secretory vesicle. It localises to the acrosome lumen. Functionally, may be involved in binding, concentrating, and sorting soluble glycoproteins or glycolipids that are destined for the acrosome. The sequence is that of Neuronal pentraxin-2 (NPTX2) from Cavia porcellus (Guinea pig).